A 269-amino-acid polypeptide reads, in one-letter code: Ice-binding protein (269 aa).

The N-terminal stretch at 1-24 (MLKINRKYAIILAIVAFSSFQTEA) is a signal peptide. 7 consecutive short sequence motifs (probable ice-binding motif (T/S-X-T)) follow at residues 45 to 47 (TVT), 65 to 67 (SAT), 128 to 130 (SAQ), 154 to 156 (TLT), 180 to 182 (SAT), 198 to 200 (SIT), and 218 to 220 (AVT). Positions 240 to 263 (VPEPDSSLAVLGSGLVSLLFAFRK) are PEP C-terminal anchor. A helical membrane pass occupies residues 245-261 (SSLAVLGSGLVSLLFAF).

This sequence belongs to the ice-binding protein family.

The protein resides in the cell outer membrane. In terms of biological role, a probable ice-binding protein that has ice-structuring activities in vitro. Thought not to anchor the cyanobacterium to ice surfaces, as its habitat is shallow puddles fed by glacier meltwater. This Nostoc sp. (strain HG1) protein is Ice-binding protein.